The following is a 93-amino-acid chain: CRISPR-associated endoribonuclease Cas2 (93 aa).

Residue aspartate 8 participates in Mg(2+) binding.

The protein belongs to the CRISPR-associated endoribonuclease Cas2 protein family. Homodimer, forms a heterotetramer with a Cas1 homodimer. Mg(2+) serves as cofactor.

In terms of biological role, CRISPR (clustered regularly interspaced short palindromic repeat), is an adaptive immune system that provides protection against mobile genetic elements (viruses, transposable elements and conjugative plasmids). CRISPR clusters contain sequences complementary to antecedent mobile elements and target invading nucleic acids. CRISPR clusters are transcribed and processed into CRISPR RNA (crRNA). Functions as a ssRNA-specific endoribonuclease. Involved in the integration of spacer DNA into the CRISPR cassette. This is CRISPR-associated endoribonuclease Cas2 from Thermofilum pendens (strain DSM 2475 / Hrk 5).